A 138-amino-acid chain; its full sequence is Small ribosomal subunit protein uS11 (138 aa).

2 disordered regions span residues methionine 1–alanine 29 and glycine 117–valine 138. Over residues lysine 13–lysine 22 the composition is skewed to basic residues.

It belongs to the universal ribosomal protein uS11 family. Part of the 30S ribosomal subunit. Interacts with proteins S7 and S18. Binds to IF-3.

Functionally, located on the platform of the 30S subunit, it bridges several disparate RNA helices of the 16S rRNA. Forms part of the Shine-Dalgarno cleft in the 70S ribosome. This Mycobacterium ulcerans (strain Agy99) protein is Small ribosomal subunit protein uS11.